Here is a 317-residue protein sequence, read N- to C-terminus: MEIDNQTWVREFILLGLSSDWCTQISLFSLFLVTYLMTVLGNCLIVLLIRLDSRLHTPMYFFLTNLSLVDVSYATSVVPQLLAHFLAEHKAIPFQSCAAQLFFSLALGGIEFVLLAVMAYDRHVAVSDRLRYSAIMHGGLCARLAITSWVSGSINSLVQTAITFQLPMCTNKFIDHISCELLAVVRLACVDTSSNEAAIMVSSIVLLMTPFCLVLLSYIRIISTILKIQSREGRKKAFHTCASHLTVVALCYGTTIFTYIQPHSGPSVLQEKLISVFYAIVMPLLNPVIYSLRNKEVKGAWHKLLEKFSGLTSKLGT.

The Extracellular segment spans residues 1-25; sequence MEIDNQTWVREFILLGLSSDWCTQI. N-linked (GlcNAc...) asparagine glycosylation occurs at N5. The helical transmembrane segment at 26–49 threads the bilayer; the sequence is SLFSLFLVTYLMTVLGNCLIVLLI. Residues 50 to 57 lie on the Cytoplasmic side of the membrane; it reads RLDSRLHT. The helical transmembrane segment at 58–79 threads the bilayer; sequence PMYFFLTNLSLVDVSYATSVVP. At 80–100 the chain is on the extracellular side; it reads QLLAHFLAEHKAIPFQSCAAQ. C97 and C189 are oxidised to a cystine. A helical membrane pass occupies residues 101–120; that stretch reads LFFSLALGGIEFVLLAVMAY. The Cytoplasmic segment spans residues 121–139; the sequence is DRHVAVSDRLRYSAIMHGG. The helical transmembrane segment at 140–158 threads the bilayer; it reads LCARLAITSWVSGSINSLV. The Extracellular portion of the chain corresponds to 159–195; the sequence is QTAITFQLPMCTNKFIDHISCELLAVVRLACVDTSSN. The chain crosses the membrane as a helical span at residues 196 to 219; sequence EAAIMVSSIVLLMTPFCLVLLSYI. Over 220-236 the chain is Cytoplasmic; that stretch reads RIISTILKIQSREGRKK. The chain crosses the membrane as a helical span at residues 237–259; sequence AFHTCASHLTVVALCYGTTIFTY. The Extracellular segment spans residues 260–272; the sequence is IQPHSGPSVLQEK. A helical transmembrane segment spans residues 273–292; that stretch reads LISVFYAIVMPLLNPVIYSL. Residues 293 to 317 are Cytoplasmic-facing; that stretch reads RNKEVKGAWHKLLEKFSGLTSKLGT.

It belongs to the G-protein coupled receptor 1 family.

The protein resides in the cell membrane. Odorant receptor. This is Olfactory receptor 2F2 (OR2F2) from Homo sapiens (Human).